The sequence spans 383 residues: Chaperone protein DnaJ (383 aa).

In terms of domain architecture, J spans 6–71 (DYYEVLGVSK…QKRSQYDQFG (66 aa)). A CR-type zinc finger spans residues 141 to 223 (GVEKKVKVKK…CKGEGVEIGE (83 aa)). Zn(2+)-binding residues include Cys154, Cys157, Cys171, Cys174, Cys197, Cys200, Cys211, and Cys214. CXXCXGXG motif repeat units follow at residues 154–161 (CSKCRGDG), 171–178 (CQTCHGTG), 197–204 (CPTCHGEG), and 211–218 (CSKCKGEG).

This sequence belongs to the DnaJ family. In terms of assembly, homodimer. Zn(2+) is required as a cofactor.

The protein localises to the cytoplasm. Participates actively in the response to hyperosmotic and heat shock by preventing the aggregation of stress-denatured proteins and by disaggregating proteins, also in an autonomous, DnaK-independent fashion. Unfolded proteins bind initially to DnaJ; upon interaction with the DnaJ-bound protein, DnaK hydrolyzes its bound ATP, resulting in the formation of a stable complex. GrpE releases ADP from DnaK; ATP binding to DnaK triggers the release of the substrate protein, thus completing the reaction cycle. Several rounds of ATP-dependent interactions between DnaJ, DnaK and GrpE are required for fully efficient folding. Also involved, together with DnaK and GrpE, in the DNA replication of plasmids through activation of initiation proteins. This is Chaperone protein DnaJ from Porphyromonas gingivalis (strain ATCC BAA-308 / W83).